Consider the following 388-residue polypeptide: Chorismate synthase (388 aa).

NADP(+) is bound by residues R39 and R45. The disordered stretch occupies residues 95-118 (EKNEKSRRVSRPRPGHADLVGGMK). Residues 130–132 (RSS), 251–252 (NA), G296, 311–315 (KPIPT), and R337 each bind FMN.

It belongs to the chorismate synthase family. Homotetramer. FMNH2 is required as a cofactor.

The enzyme catalyses 5-O-(1-carboxyvinyl)-3-phosphoshikimate = chorismate + phosphate. Its pathway is metabolic intermediate biosynthesis; chorismate biosynthesis; chorismate from D-erythrose 4-phosphate and phosphoenolpyruvate: step 7/7. Functionally, catalyzes the anti-1,4-elimination of the C-3 phosphate and the C-6 proR hydrogen from 5-enolpyruvylshikimate-3-phosphate (EPSP) to yield chorismate, which is the branch point compound that serves as the starting substrate for the three terminal pathways of aromatic amino acid biosynthesis. This reaction introduces a second double bond into the aromatic ring system. This Listeria innocua serovar 6a (strain ATCC BAA-680 / CLIP 11262) protein is Chorismate synthase.